A 1254-amino-acid polypeptide reads, in one-letter code: Receptor tyrosine-protein kinase erbB-2 (1254 aa).

The first 22 residues, Met-1–Gly-22, serve as a signal peptide directing secretion. At Thr-23–Thr-652 the chain is on the extracellular side. Residues Cys-26 and Cys-53 are joined by a disulfide bond. 3 N-linked (GlcNAc...) asparagine glycosylation sites follow: Asn-68, Asn-125, and Asn-187. Cystine bridges form between Cys-162–Cys-192, Cys-195–Cys-204, Cys-199–Cys-212, Cys-236–Cys-244, Cys-240–Cys-252, Cys-255–Cys-264, Cys-268–Cys-295, Cys-299–Cys-311, Cys-315–Cys-331, Cys-334–Cys-338, Cys-342–Cys-367, Cys-475–Cys-504, Cys-511–Cys-520, and Cys-515–Cys-528. N-linked (GlcNAc...) asparagine glycosylation occurs at Asn-259. Asn-530 is a glycosylation site (N-linked (GlcNAc...) asparagine). 8 cysteine pairs are disulfide-bonded: Cys-531–Cys-540, Cys-544–Cys-560, Cys-563–Cys-576, Cys-567–Cys-584, Cys-587–Cys-596, Cys-600–Cys-623, Cys-626–Cys-634, and Cys-630–Cys-642. The N-linked (GlcNAc...) asparagine glycan is linked to Asn-571. An N-linked (GlcNAc...) asparagine glycan is attached at Asn-629. Residues Ser-653–Ile-675 traverse the membrane as a helical segment. A required for interaction with KPNB1 and EEA1 region spans residues Lys-676–Arg-689. The Nuclear localization signal signature appears at Lys-676 to Arg-689. Residues Lys-676–Val-1254 are Cytoplasmic-facing. The region spanning Leu-720–Val-987 is the Protein kinase domain. Residues Leu-726–Val-734 and Lys-753 contribute to the ATP site. Catalysis depends on Asp-845, which acts as the Proton acceptor. Position 877 is a phosphotyrosine (Tyr-877). Disordered stretches follow at residues Gly-1029–Pro-1116 and Cys-1133–Gly-1179. 4 positions are modified to phosphoserine: Ser-1054, Ser-1078, Ser-1083, and Ser-1107. Tyr-1112 bears the Phosphotyrosine mark. At Tyr-1139 the chain carries Phosphotyrosine; by autocatalysis. Positions Arg-1146–Arg-1161 are enriched in pro residues. Thr-1166 is subject to Phosphothreonine. Positions Glu-1195–Leu-1197 are interaction with PIK3C2B. Tyr-1196 bears the Phosphotyrosine mark. A disordered region spans residues Asp-1223–Val-1254. Over residues Pro-1232 to Ala-1242 the composition is skewed to polar residues. Tyr-1247 is subject to Phosphotyrosine; by autocatalysis.

It belongs to the protein kinase superfamily. Tyr protein kinase family. EGF receptor subfamily. As to quaternary structure, homodimer. Heterodimer with EGFR, ERBB3 and ERBB4. Part of a complex with EGFR and either PIK3C2A or PIK3C2B. May interact with PIK3C2B when phosphorylated on Tyr-1196. Interacts with PRKCABP and PLXNB1. Interacts (when phosphorylated on Tyr-1247) with MEMO. Interacts with MUC1. Interacts (when phosphorylated on Tyr-1139) with GRB7 (via SH2 domain). Interacts (when phosphorylated on Tyr-1247) with ERBIN. Interacts with SRC, KPNB1, RANBP2, EEA1, CRM1, CLTC, PTK6, RPA194, MYOC and ACTB. Interacts (preferentially with the tyrosine phosphorylated form) with CPNE3; this interaction occurs at the cell membrane and is increased in a growth factor heregulin-dependent manner. Interacts with HSP90AA1 and HSP90AB1 in an ATP-dependent manner; the interaction suppresses ERBB2 kinase activity. Interacts with SORL1; this interaction regulates ERBB2 subcellular distribution by promoting its recycling after internalization from endosomes back to the plasma membrane, hence stimulates ERBB2-mediated signaling. Interacts with SH3BGRL. Interacts with ROR1. Post-translationally, autophosphorylated. Autophosphorylation occurs in trans, i.e. one subunit of the dimeric receptor phosphorylates tyrosine residues on the other subunit. Ligand-binding increases phosphorylation on tyrosine residues. Signaling via SEMA4C promotes phosphorylation at Tyr-1247. Dephosphorylated by PTPN12.

The protein localises to the cell membrane. Its subcellular location is the cell projection. It is found in the ruffle membrane. It localises to the early endosome. The protein resides in the cytoplasm. The protein localises to the perinuclear region. Its subcellular location is the nucleus. It catalyses the reaction L-tyrosyl-[protein] + ATP = O-phospho-L-tyrosyl-[protein] + ADP + H(+). In terms of biological role, protein tyrosine kinase that is part of several cell surface receptor complexes, but that apparently needs a coreceptor for ligand binding. Essential component of a neuregulin-receptor complex, although neuregulins do not interact with it alone. GP30 is a potential ligand for this receptor. Regulates outgrowth and stabilization of peripheral microtubules (MTs). Upon ERBB2 activation, the MEMO1-RHOA-DIAPH1 signaling pathway elicits the phosphorylation and thus the inhibition of GSK3B at cell membrane. This prevents the phosphorylation of APC and CLASP2, allowing its association with the cell membrane. In turn, membrane-bound APC allows the localization of MACF1 to the cell membrane, which is required for microtubule capture and stabilization. Its function is as follows. In the nucleus is involved in transcriptional regulation. Associates with the 5'-TCAAATTC-3' sequence in the PTGS2/COX-2 promoter and activates its transcription. Implicated in transcriptional activation of CDKN1A; the function involves STAT3 and SRC. Involved in the transcription of rRNA genes by RNA Pol I and enhances protein synthesis and cell growth. The polypeptide is Receptor tyrosine-protein kinase erbB-2 (ERBB2) (Mesocricetus auratus (Golden hamster)).